A 227-amino-acid chain; its full sequence is ATP-dependent Clp protease proteolytic subunit (227 aa).

Residue Ser-123 is the Nucleophile of the active site. His-148 is a catalytic residue.

Belongs to the peptidase S14 family. Fourteen ClpP subunits assemble into 2 heptameric rings which stack back to back to give a disk-like structure with a central cavity, resembling the structure of eukaryotic proteasomes.

It localises to the cytoplasm. The catalysed reaction is Hydrolysis of proteins to small peptides in the presence of ATP and magnesium. alpha-casein is the usual test substrate. In the absence of ATP, only oligopeptides shorter than five residues are hydrolyzed (such as succinyl-Leu-Tyr-|-NHMec, and Leu-Tyr-Leu-|-Tyr-Trp, in which cleavage of the -Tyr-|-Leu- and -Tyr-|-Trp bonds also occurs).. Its function is as follows. Cleaves peptides in various proteins in a process that requires ATP hydrolysis. Has a chymotrypsin-like activity. Plays a major role in the degradation of misfolded proteins. The sequence is that of ATP-dependent Clp protease proteolytic subunit from Chlorobium phaeobacteroides (strain DSM 266 / SMG 266 / 2430).